A 607-amino-acid chain; its full sequence is Elongation factor 4 (607 aa).

The 183-residue stretch at 11–193 (EKIRNFSIIA…QIVEKVPAPQ (183 aa)) folds into the tr-type G domain. GTP contacts are provided by residues 23-28 (DHGKST) and 140-143 (NKID).

It belongs to the TRAFAC class translation factor GTPase superfamily. Classic translation factor GTPase family. LepA subfamily.

The protein resides in the cell membrane. The enzyme catalyses GTP + H2O = GDP + phosphate + H(+). Functionally, required for accurate and efficient protein synthesis under certain stress conditions. May act as a fidelity factor of the translation reaction, by catalyzing a one-codon backward translocation of tRNAs on improperly translocated ribosomes. Back-translocation proceeds from a post-translocation (POST) complex to a pre-translocation (PRE) complex, thus giving elongation factor G a second chance to translocate the tRNAs correctly. Binds to ribosomes in a GTP-dependent manner. The protein is Elongation factor 4 of Lactococcus lactis subsp. lactis (strain IL1403) (Streptococcus lactis).